The following is a 102-amino-acid chain: Serum amyloid A-5 protein (102 aa).

The disordered stretch occupies residues 68–102; that stretch reads GRGHEDSMADQEANRWGRSGNDPNHYRPAGLPDKY. Basic and acidic residues predominate over residues 69 to 82; that stretch reads RGHEDSMADQEANR.

This sequence belongs to the SAA family. Expressed by the liver; secreted in plasma.

The protein localises to the secreted. Functionally, major acute phase reactant. Apolipoprotein of the HDL complex. The chain is Serum amyloid A-5 protein from Mesocricetus auratus (Golden hamster).